We begin with the raw amino-acid sequence, 363 residues long: Neutral protease 2 homolog MEP7 (363 aa).

The signal sequence occupies residues 1–19 (MLLCSMVAALAALATPAFS). A propeptide spanning residues 20–181 (CALPHLDLPE…ARAIQPLDRR (162 aa)) is cleaved from the precursor. Cystine bridges form between C187–C259 and C266–C284. H308 is a Zn(2+) binding site. Residue E309 is part of the active site. Residues H312 and D323 each contribute to the Zn(2+) site.

This sequence belongs to the peptidase M35 family. It depends on Zn(2+) as a cofactor.

The protein resides in the secreted. The catalysed reaction is Preferential cleavage of bonds with hydrophobic residues in P1'. Also 3-Asn-|-Gln-4 and 8-Gly-|-Ser-9 bonds in insulin B chain.. Functionally, secreted metalloproteinase that allows assimilation of proteinaceous substrates. Shows high activities on basic nuclear substrates such as histone and protamine. May be involved in virulence. This is Neutral protease 2 homolog MEP7 (MEP7) from Coccidioides posadasii (strain C735) (Valley fever fungus).